Here is a 199-residue protein sequence, read N- to C-terminus: NAD(P)H-quinone oxidoreductase subunit 6, chloroplastic (199 aa).

A run of 5 helical transmembrane segments spans residues 13-33, 35-55, 64-84, 96-118, and 157-177; these read AILLLIESGVILGSLGVVLFT, IVYSAFLLGWVPVCISFLYIL, VQILIYVGTINVLIVFAVMLI, WTVGDGTALALCTSPFLSIIAAI, and LPFELLSIILLVAPVGAITMA.

This sequence belongs to the complex I subunit 6 family. NDH is composed of at least 16 different subunits, 5 of which are encoded in the nucleus.

It localises to the plastid. The protein resides in the chloroplast thylakoid membrane. The catalysed reaction is a plastoquinone + NADH + (n+1) H(+)(in) = a plastoquinol + NAD(+) + n H(+)(out). It carries out the reaction a plastoquinone + NADPH + (n+1) H(+)(in) = a plastoquinol + NADP(+) + n H(+)(out). Its function is as follows. NDH shuttles electrons from NAD(P)H:plastoquinone, via FMN and iron-sulfur (Fe-S) centers, to quinones in the photosynthetic chain and possibly in a chloroplast respiratory chain. The immediate electron acceptor for the enzyme in this species is believed to be plastoquinone. Couples the redox reaction to proton translocation, and thus conserves the redox energy in a proton gradient. This is NAD(P)H-quinone oxidoreductase subunit 6, chloroplastic (ndhG) from Huperzia lucidula (Shining clubmoss).